A 93-amino-acid chain; its full sequence is Aspartyl/glutamyl-tRNA(Asn/Gln) amidotransferase subunit C (93 aa).

This sequence belongs to the GatC family. Heterotrimer of A, B and C subunits.

It catalyses the reaction L-glutamyl-tRNA(Gln) + L-glutamine + ATP + H2O = L-glutaminyl-tRNA(Gln) + L-glutamate + ADP + phosphate + H(+). It carries out the reaction L-aspartyl-tRNA(Asn) + L-glutamine + ATP + H2O = L-asparaginyl-tRNA(Asn) + L-glutamate + ADP + phosphate + 2 H(+). Allows the formation of correctly charged Asn-tRNA(Asn) or Gln-tRNA(Gln) through the transamidation of misacylated Asp-tRNA(Asn) or Glu-tRNA(Gln) in organisms which lack either or both of asparaginyl-tRNA or glutaminyl-tRNA synthetases. The reaction takes place in the presence of glutamine and ATP through an activated phospho-Asp-tRNA(Asn) or phospho-Glu-tRNA(Gln). The protein is Aspartyl/glutamyl-tRNA(Asn/Gln) amidotransferase subunit C of Helicobacter pylori (strain HPAG1).